A 282-amino-acid polypeptide reads, in one-letter code: DNA processing protein DprA (282 aa).

It belongs to the DprA/Smf family. As to quaternary structure, homodimer; forms tail-to-tail dimers, forms nucleoprotein complex (NPC) which requires at least 30 nucleotides (nt) of ssDNA becoming optimal with 50 nt. Interacts with RecA, forms mixed DprA-RecA-ssDNA filaments. Interacts with ComFA and ComFC.

The protein localises to the cytoplasm. Its function is as follows. Protein that helps load RecA onto ssDNA during transformation. Required for DNA transformation. Not required for DNA uptake but for a later stage of transformation. Thought to interact at the cell pole with newly imported transforming ssDNA which it binds cooperatively, protecting linear and circular ssDNA from nuclease action. Forms bridges between DNA segments. Favors the loading of RecA onto ssDNA and formation of RecA-DNA filaments, triggering RecA-catalysis of ATP-driven homologous DNA pairing. This is DNA processing protein DprA from Streptococcus pneumoniae (strain ATCC BAA-255 / R6).